The primary structure comprises 208 residues: Claudin-like protein ZF-A89 (208 aa).

4 consecutive transmembrane segments (helical) span residues 8-28 (LLAT…CALP), 82-102 (ALVV…IAGG), 117-137 (VVVA…IPVC), and 160-180 (LGAS…GGAL).

The protein belongs to the claudin family.

The protein resides in the cell membrane. It is found in the cell junction. Its subcellular location is the tight junction. Functionally, component of tight junction (TJ) strands. In Danio rerio (Zebrafish), this protein is Claudin-like protein ZF-A89 (cldnd).